Reading from the N-terminus, the 132-residue chain is D-ribose pyranase (132 aa).

His-20 serves as the catalytic Proton donor. Substrate contacts are provided by residues Asp-28, His-99, and 121 to 123 (YSN).

This sequence belongs to the RbsD / FucU family. RbsD subfamily. As to quaternary structure, homodecamer.

It localises to the cytoplasm. It catalyses the reaction beta-D-ribopyranose = beta-D-ribofuranose. It participates in carbohydrate metabolism; D-ribose degradation; D-ribose 5-phosphate from beta-D-ribopyranose: step 1/2. In terms of biological role, catalyzes the interconversion of beta-pyran and beta-furan forms of D-ribose. This Streptococcus agalactiae serotype V (strain ATCC BAA-611 / 2603 V/R) protein is D-ribose pyranase.